A 418-amino-acid polypeptide reads, in one-letter code: E3 ubiquitin-protein ligase pellino homolog 1 (418 aa).

The FHA; atypical domain occupies 13-200; the sequence is APVKYGELIV…MHPRNGFTED (188 aa). Serine 121 carries the phosphoserine; by ATM modification. Threonine 127 carries the post-translational modification Phosphothreonine; by ATM. Positions 311 to 399 are ring-like domain; necessary for ubiqitination of RIPK3; it reads CGHVHGYHNW…TFHAACPFCA (89 aa).

Belongs to the pellino family. Interacts with MAP3K7. Upon IL1B treatment, forms a complex with TRAF6, IRAK1, IRAK4 and MYD88; this complex recruits MAP3K7/TAK1, TAB1 and TAB2 to mediate NF-kappa-B activation. Direct binding of SMAD6 to PELI1 prevents the complex formation and hence negatively regulates IL1R-TLR signaling and eventually NF-kappa-B-mediated gene expression. Interacts (via atypical FHA domain) with RIPK3; preferentially binds to the 'Thr-182' phosphorylated form of RIPK3. Interacts with RIPK1 and IRAK1. In terms of processing, phosphorylation by IRAK1 and IRAK4 enhances its E3 ligase activity. Phosphorylated by ATM in response to DNA damage, promoting localization to DNA double-strand breaks (DSBs) and ability to mediate 'Lys-63'-linked ubiquitination of NBN. Sumoylated. As to expression, expressed at high levels in normal skin but decreased in keratinocytes from toxic epidermal necrolysis (TEN) patients (at protein level).

The protein resides in the chromosome. It catalyses the reaction S-ubiquitinyl-[E2 ubiquitin-conjugating enzyme]-L-cysteine + [acceptor protein]-L-lysine = [E2 ubiquitin-conjugating enzyme]-L-cysteine + N(6)-ubiquitinyl-[acceptor protein]-L-lysine.. It participates in protein modification; protein ubiquitination. E3 ubiquitin ligase catalyzing the covalent attachment of ubiquitin moieties onto substrate proteins. Involved in the TLR and IL-1 signaling pathways via interaction with the complex containing IRAK kinases and TRAF6. Acts as a positive regulator of inflammatory response in microglia through activation of NF-kappa-B and MAP kinase. Mediates 'Lys-63'-linked polyubiquitination of IRAK1 allowing subsequent NF-kappa-B activation. Conjugates 'Lys-63'-linked ubiquitin chains to the adapter protein ASC/PYCARD, which in turn is crucial for NLRP3 inflammasome activation. Mediates 'Lys-48'-linked polyubiquitination of RIPK3 leading to its subsequent proteasome-dependent degradation; preferentially recognizes and mediates the degradation of the 'Thr-182' phosphorylated form of RIPK3. Negatively regulates necroptosis by reducing RIPK3 expression. Mediates 'Lys-63'-linked ubiquitination of RIPK1. Following phosphorylation by ATM, catalyzes 'Lys-63'-linked ubiquitination of NBN, promoting DNA repair via homologous recombination. Negatively regulates activation of the metabolic mTORC1 signaling pathway by mediating 'Lys-63'-linked ubiquitination of mTORC1-inhibitory protein TSC1 and thereby promoting TSC1/TSC2 complex stability. The protein is E3 ubiquitin-protein ligase pellino homolog 1 of Homo sapiens (Human).